We begin with the raw amino-acid sequence, 176 residues long: Translation initiation factor IF-3 (176 aa).

Belongs to the IF-3 family. In terms of assembly, monomer.

It localises to the cytoplasm. Its function is as follows. IF-3 binds to the 30S ribosomal subunit and shifts the equilibrium between 70S ribosomes and their 50S and 30S subunits in favor of the free subunits, thus enhancing the availability of 30S subunits on which protein synthesis initiation begins. This chain is Translation initiation factor IF-3, found in Wolinella succinogenes (strain ATCC 29543 / DSM 1740 / CCUG 13145 / JCM 31913 / LMG 7466 / NCTC 11488 / FDC 602W) (Vibrio succinogenes).